Here is a 101-residue protein sequence, read N- to C-terminus: Small ribosomal subunit protein uS14 (101 aa).

This sequence belongs to the universal ribosomal protein uS14 family. As to quaternary structure, part of the 30S ribosomal subunit. Contacts proteins S3 and S10.

Its function is as follows. Binds 16S rRNA, required for the assembly of 30S particles and may also be responsible for determining the conformation of the 16S rRNA at the A site. The protein is Small ribosomal subunit protein uS14 of Pseudoalteromonas translucida (strain TAC 125).